The sequence spans 478 residues: Glycogen synthase (478 aa).

ADP-alpha-D-glucose is bound at residue Lys-15.

The protein belongs to the glycosyltransferase 1 family. Bacterial/plant glycogen synthase subfamily.

The enzyme catalyses [(1-&gt;4)-alpha-D-glucosyl](n) + ADP-alpha-D-glucose = [(1-&gt;4)-alpha-D-glucosyl](n+1) + ADP + H(+). The protein operates within glycan biosynthesis; glycogen biosynthesis. Its function is as follows. Synthesizes alpha-1,4-glucan chains using ADP-glucose. This Actinobacillus pleuropneumoniae serotype 5b (strain L20) protein is Glycogen synthase.